The primary structure comprises 358 residues: Methionine aminopeptidase 2 (358 aa).

Residue H109 coordinates substrate. Positions 130, 141, and 210 each coordinate a divalent metal cation. H218 serves as a coordination point for substrate. A divalent metal cation contacts are provided by E243 and E339.

The protein belongs to the peptidase M24A family. Methionine aminopeptidase eukaryotic type 2 subfamily. Co(2+) is required as a cofactor. Zn(2+) serves as cofactor. It depends on Mn(2+) as a cofactor. Requires Fe(2+) as cofactor.

The protein localises to the cytoplasm. The catalysed reaction is Release of N-terminal amino acids, preferentially methionine, from peptides and arylamides.. Functionally, cotranslationally removes the N-terminal methionine from nascent proteins. The N-terminal methionine is often cleaved when the second residue in the primary sequence is small and uncharged (Met-Ala-, Cys, Gly, Pro, Ser, Thr, or Val). This is Methionine aminopeptidase 2 from Encephalitozoon intestinalis (strain ATCC 50506) (Microsporidian parasite).